Reading from the N-terminus, the 152-residue chain is CMT1A duplicated region transcript 4 protein (152 aa).

A compositionally biased stretch (basic and acidic residues) spans 1–11 (MDARRMKKEEG). 2 disordered regions span residues 1–23 (MDAR…RKLL) and 60–89 (ERPW…GKAV). Residues 65-74 (SRQNKPSSVI) show a composition bias toward polar residues.

In terms of tissue distribution, expressed in fetal skeletal muscle and kidney.

The chain is CMT1A duplicated region transcript 4 protein (CDRT4) from Homo sapiens (Human).